We begin with the raw amino-acid sequence, 701 residues long: Polyribonucleotide nucleotidyltransferase (701 aa).

Mg(2+)-binding residues include Asp487 and Asp493. The region spanning 554–613 (PTMIAMKIDTDKIRDVIGKGGATIRAICEETKASIDIEDDGSIKIFGETKEAADAAKQRI) is the KH domain. In terms of domain architecture, S1 motif spans 623-691 (GKIYVGKVER…NRGRIKLSIK (69 aa)).

The protein belongs to the polyribonucleotide nucleotidyltransferase family. As to quaternary structure, component of the RNA degradosome, which is a multiprotein complex involved in RNA processing and mRNA degradation. Requires Mg(2+) as cofactor.

The protein resides in the cytoplasm. It catalyses the reaction RNA(n+1) + phosphate = RNA(n) + a ribonucleoside 5'-diphosphate. Involved in mRNA degradation. Catalyzes the phosphorolysis of single-stranded polyribonucleotides processively in the 3'- to 5'-direction. The protein is Polyribonucleotide nucleotidyltransferase of Pseudomonas entomophila (strain L48).